We begin with the raw amino-acid sequence, 344 residues long: Phenylalanine--tRNA ligase alpha subunit (344 aa).

A Mg(2+)-binding site is contributed by Glu256.

Belongs to the class-II aminoacyl-tRNA synthetase family. Phe-tRNA synthetase alpha subunit type 1 subfamily. As to quaternary structure, tetramer of two alpha and two beta subunits. It depends on Mg(2+) as a cofactor.

Its subcellular location is the cytoplasm. It carries out the reaction tRNA(Phe) + L-phenylalanine + ATP = L-phenylalanyl-tRNA(Phe) + AMP + diphosphate + H(+). This chain is Phenylalanine--tRNA ligase alpha subunit, found in Bacillus cereus (strain G9842).